The following is a 194-amino-acid chain: Calcium channel flower (194 aa).

Helical transmembrane passes span 35-55 (LGIV…FSII), 66-88 (IIQM…VCFE), and 107-127 (GLYI…ASLF).

This sequence belongs to the calcium channel flower family. Homomultimer. Associates with the dally/ magu complex.

Its subcellular location is the cell membrane. The protein resides in the cytoplasmic vesicle. It localises to the secretory vesicle. It is found in the synaptic vesicle membrane. The protein localises to the presynaptic cell membrane. Its subcellular location is the endosome. Its activity is regulated as follows. Channel activity is inhibited by La(3+), which reduces Ca(2+) influx and thus inhibits it's function in promoting activity-dependent bulk endocytosis (ADBE) in response to high stimuli. Transmembrane protein which mediates synaptic endocytosis, fitness-based cell culling, neuronal culling, morphogen gradient scaling, and calcium transport. Regulates synaptic endocytosis and hence couples exo- with endocytosis. Controls two major modes of synaptic vesicle (SV) endocytosis in the synaptic boutons of neuromuscular junctions (NMJs); Ca(2+) channel-independent Clathrin-mediated endocytosis (CME) in response to mild stimulation, and Ca(2+) channel-dependent activity-dependent bulk endocytosis (ADBE) in response to strong stimulation. Functions in ADBE and subsequent SV reformation from bulk endosomes by initiating Ca(2+) channel-dependent phosphatidylinositol 4,5-bisphosphate (PtdIns(4,5)P2) compartmentalization in synaptic boutons. There it acts at the periactive zone to provide the low Ca(2+) levels required to initiate Calcineurin activation and upregulate PtdIns(4,5)P2. Conversely PtdIns(4,5)P2 enhances fwe Ca(2+) channel-activity, establishing a positive feedback loop that induces PtdIns(4,5)P2 microdomain at the periactive zone. These microdomains trigger bulk membrane invagination (i.e. ADBE) by triggering actin polymerization while also promoting localization of fwe to bulk endosomes, thereby removing the ADBE trigger to reduce endocytosis and prevent excess membrane uptake. PtdIns(4,5)P2 then promotes SV reformation from the bulk endosomes, to coordinate ADBE and subsequent SV reformation. Different combinations of the flower isoforms at the cell membrane are also required for the identification and elimination of suboptimal or supernumerary cells during development, regeneration, and adulthood. Required for the recognition and elimination of unfit cells in the developing wing during cell competition. In the developing pupal retina, mediates the elimination of unwanted postmitotic neurons, including supernumerary photoreceptor neurons that form at the periphery of the retina and are contained within incomplete ommatidia units. Also required for efficient elimination and replacement of old neurons by newly generated neurons during regeneration in the adult brain following mechanical injury. Downstream of the flower fitness fingerprints, cells identified as unwanted or unfit are eliminated via apoptosis through the expression of ahuizotl (azot). However, the cells marked for elimination by the flower isoforms only undergo apoptosis if additional thresholds are met; (1) their neighboring fit/healthy cells express different levels of the fwe isoforms, and (2) the levels of the protective signal SPARC expressed by the loser or unwanted cells are unable to inhibit caspase activation. These additional thresholds for flower-mediated apoptosis, allows useful cells to recover from transient and limited stress before they are unnecessarily eliminated. Functions with dally and magu in a mechanism of scaling, which utilises apoptosis to ensure that the dpp morphogen gradient, which mediates organ growth, remains proportional to the size of the growing wing. In this mechanism, fwe represses dally- and Magu-dependent activity in expanding the gradient, and dally/Magu inhibits fwe-dependent apoptosis to keep cell death rate low. When the levels of these different proteins are optimally regulated the gradient correctly scales with organ growth but when this fails, fwe-mediated apoptosis is activated to trim the developing tissue to match the correct size of the gradient. This Drosophila sechellia (Fruit fly) protein is Calcium channel flower.